Reading from the N-terminus, the 532-residue chain is Intercellular adhesion molecule 1 (532 aa).

An N-terminal signal peptide occupies residues Met1–Ala27. Topologically, residues Gln28–Glu480 are extracellular. Ig-like C2-type domains are found at residues Gly41–Ala103 and Gly128–Arg193. Intrachain disulfides connect Cys48–Cys92, Cys52–Cys96, and Cys135–Cys186. Residues Arg152–Glu154 carry the Cell attachment site; atypical motif. N-linked (GlcNAc...) asparagine glycans are attached at residues Asn202 and Asn267. 2 Ig-like C2-type domains span residues Asp230–Gln297 and Gly325–Ala378. Disulfide bonds link Cys237–Cys290 and Cys332–Cys371. N-linked (GlcNAc...) asparagine glycosylation is found at Asn385 and Asn406. Intrachain disulfides connect Cys403–Cys419, Cys419–Cys457, and Cys431–Cys457. Residues Asn412–Gly464 enclose the Ig-like C2-type 5 domain. Residues Phe481 to Tyr503 traverse the membrane as a helical segment. The Cytoplasmic portion of the chain corresponds to Asn504–Pro532. Thr521 and Thr530 each carry phosphothreonine.

The protein belongs to the immunoglobulin superfamily. ICAM family. In terms of assembly, homodimer. Interacts with MUC1 and promotes cell aggregation in epithelial cells. Interacts with ARHGEF26/SGEF. Interacts (on T cell side) with CD81, CD247 and CD9 at immunological synapses between antigen-presenting cells and T cells. Monoubiquitinated, which is promoted by MARCH9 and leads to endocytosis.

Its subcellular location is the membrane. Its function is as follows. ICAM proteins are ligands for the leukocyte adhesion protein LFA-1 (integrin alpha-L/beta-2). During leukocyte trans-endothelial migration, ICAM1 engagement promotes the assembly of endothelial apical cups through ARHGEF26/SGEF and RHOG activation. The sequence is that of Intercellular adhesion molecule 1 (ICAM1) from Gorilla gorilla gorilla (Western lowland gorilla).